Consider the following 169-residue polypeptide: T-cell receptor gamma chain C region DFL12 (169 aa).

Residues 1–136 (PSDKRLDADI…LQFMSTSAYY (136 aa)) form a c region region. A helical transmembrane segment spans residues 137–157 (TYLLLLLKSVIYLAIISFSLL). At 158 to 169 (RRTSVCCNEKRS) the chain is on the cytoplasmic side.

It localises to the membrane. This chain is T-cell receptor gamma chain C region DFL12, found in Mus musculus (Mouse).